Here is a 232-residue protein sequence, read N- to C-terminus: Proteasome subunit alpha (232 aa).

This sequence belongs to the peptidase T1A family. As to quaternary structure, the 20S proteasome core is composed of 14 alpha and 14 beta subunits that assemble into four stacked heptameric rings, resulting in a barrel-shaped structure. The two inner rings, each composed of seven catalytic beta subunits, are sandwiched by two outer rings, each composed of seven alpha subunits. The catalytic chamber with the active sites is on the inside of the barrel. Has a gated structure, the ends of the cylinder being occluded by the N-termini of the alpha-subunits. Is capped by the proteasome-associated ATPase, ARC.

The protein localises to the cytoplasm. It functions in the pathway protein degradation; proteasomal Pup-dependent pathway. With respect to regulation, the formation of the proteasomal ATPase ARC-20S proteasome complex, likely via the docking of the C-termini of ARC into the intersubunit pockets in the alpha-rings, may trigger opening of the gate for substrate entry. Interconversion between the open-gate and close-gate conformations leads to a dynamic regulation of the 20S proteasome proteolysis activity. Functionally, component of the proteasome core, a large protease complex with broad specificity involved in protein degradation. The sequence is that of Proteasome subunit alpha from Acidimicrobium ferrooxidans (strain DSM 10331 / JCM 15462 / NBRC 103882 / ICP).